The chain runs to 2615 residues: MDVDEDQHAVAVLHHKIQANPELCVSDEQDSCPSDAPKGTARDPESQKPSSPAPWDKNVLNTGSEERLSFINGEPQAPPNWDEGTNSFSNPPPGISHTCNLSASWYHPESSSPLTQHPPRATLVTQPENVEHFAICCFPETDAQALPALGIRVHVASGTALCLLLDFGDNCGAQMRLCTLAGATTVTGYHQYRKEGVYELKAVVHDFHRAEELGPYYVDISHGNVSVFMNSSSIHDSEALSFADSLPQQRGTVVVHCFSSISSYNVSFISQTQVASGQAWCGVTVGYKMQSVSVYTNGTVFAANTNITFVAITEETIPLEFAWYFGENPPVMTTSRSIRRRLSVPQWYRVKVKATSRIGSVVSEPHLIRVQKRIMANRLVSTASALVNANVSFECRLNFGTDVAYLWNFGDDTIELGSSSSSHVYSREGEFTVEVLAFNNVSSTTLRKQLFIVREPCQPPPVKNMGPAKVQIWRSQPLRLGVTFEAAILCNISQGLSYTWSFVSAEMTTVTLPTAVNTRRQTIMLPSYTLECGNYTAIAKVQIKGSMVYSNYCVGVEVRARAPVSVISEGTHIFISTATSTFIILRGAQSYDPDNPGAALRYHWTCTAASSPRWPCFDNSTSYQVDTQAPAISFPAKWLSECCDQFLVTLTVSSRGQNSSQALMFLSTRPDLAFRFVHISWVNFRDISVNWNEEVSLRAVCEDCGDVPDLTYSWDLFLVNATEKSAVEVPFCSTVGLLGALALGTSLKSSKSDLPSNLRAPLTPHSPEPSPTPLGWTALSNLGSISAESTAGGHHVPASGAVAGSGEPMEEYSSLSSLAEEALMTNSSEGSWPSPSSSTDFDDFEAYYSDIQEAVLSLGRQPGTSTNFQEAGPSLSAEESASYGDNLLGPFLHTGRAKPTLMIDWPKALVSQAAFHGYTTSGIMGPAVTIKPFSLSSGKTYVLQASVASKHVLLGKAQLYLTVNQAPQDMSCQVRPHHGMEAYTIFSVFCMSGKPDFHYEFRYRIGNTSSHTLYRGQDTQHYFLLPAGDSSDNYKVIVSTEITDGHGSKVQPCTVAVTVLPRYHGNDCCDKELYNSTLESLSTLRLAGSYMETRNYITMITGILSRLYVESRNTSSCGQWSQIQDVLISSACKVPYTDQEGMMDSIHILRDLISFPNKLSLTSAMCIFKYTKMFLAQGQFSRRLLVDKKLRVEFVLLISGVWEAAKEDARDGDYLQEEGMKIISDMLLACLSDEHQIHVSTGQMEFQTLLHRSPQSSIQNLGFVQVHFPSDLASLHSTTQEATQSSCYISQLMFFMKSPYLGGQVPGQVGGVMIPRLYSCESRRPILRGQLETPVTMEFGEEDYLHKRNPAMFVLLRDEVNVHRFTGLSENSQESLQIHIKFSKPVTRPFPIILLVRFSEKATPSDFLVKRVYFWDEQTVQMYVPAAPWKGANVGYLSLLDADYDRKPPNKYLAGAVNYTVHFQWIQCVFWDKTEWRSEGPYPQPGSSPEKVNCSYHHLAPVSVLRRKLNATLEVSSISEFQSHPHNLLPGIFSAFLLVLYGILVSKSRYVDCHEKKNPGFIFLEEDTLPGYQLYAVVIDTGFRSPVRFTSKVFIVLCGENGCSETKELCCPEKPLFGRNSRHTFILSIPNQLGPLQKIRLWHDSSGSSPCWFISHVMVKELCSGQAWFFSAQCWLAVSKLGGHVLREFFCLSHGLGFWKLFYSKFTEYLEDFHIWLSLYSQPPSRSYLHTQRLAVSFCLLCVYSCLTALVTVRDHQQRPLDVGPTAITLEPFCMALLCTLLACPVAQLLSLLFRCSKEARGDMQASTQWPLRGVKTETPQGHDSSGRPDSRQPSPHPTSDLLPWNDQAWRIAASSSAVVCSPFPMEACSHKHHDLREKSHYSPPSSQAPGSGFEELGSQKSRVCLLWSSSVAWAISGSASLACGLGTGFLGYWFVPAQCMWWLYLLLLSLVCCAFITQPLMICLAALVFAWKRKHDSKFFTESLQDATKGLDLELEEHSRTRVPLSPISYSPDTAEEAERVLATRQRERHLRWAQTPSKAKLRVTGERLRRESIMQAALRDMTTHSIMLLLLLFIAYGRFCPGEISLNHAIRKAFTRKANHSLGDLSSTEDWWDWTLSTLLDELYPERTSARAWGAQPGALGGQCHLIGPPVVKLLKISAGTACTPPRPFSELVEDVLPMHSNDLDLENQNVSPGGPETCGVKKESYMHSLGKTRHEAHAALTALRASKWIDHSTRAMSVHFTLYNPPTQLFTSVILGTECLPSGGLVPSFLVESFRIFYSDSALKYLLMLSELLFLVLNVIHLCFQLWGMTTKGILSYWRKPRHWLELSMVGVAIAYYAASGHLTTLAVNITDQFHKGLYQRLVDIGLMVSWHQRARCLQGILLFLWMLKYVHLLSSLSTMTPFSAVTCFPLFRVLLVGALLLAAHYHSRWFLLFTGTLSHGTSAEAFPGLLLQFPGRSKKDSWHNCLKSDHGVMRCYYGTLFLLLATLGFRMLRATFLTVFQNRKSSHRKPLVTLKDIAVYTWHKVLTLLGLETTLEETEVATDHIYYLDEFSSLLDELLMKIDGLSDSLELSILENQWKRALESRAGDSPPVGSSEYQATGVSGPLAAESE.

At 1-1524 the chain is on the extracellular side; sequence MDVDEDQHAV…VSSISEFQSH (1524 aa). A disordered region spans residues 17–93; sequence IQANPELCVS…GTNSFSNPPP (77 aa). 7 N-linked (GlcNAc...) asparagine glycosylation sites follow: Asn-224, Asn-297, Asn-306, Asn-390, Asn-440, Asn-534, and Asn-619. PKD domains are found at residues 291-373 and 375-456; these read SVSV…VQKR and MANR…VREP. Residues 457-1349 enclose the REJ domain; sequence CQPPPVKNMG…GEEDYLHKRN (893 aa). A disordered region spans residues 749-815; sequence SSKSDLPSNL…GEPMEEYSSL (67 aa). A compositionally biased stretch (polar residues) spans 778–789; it reads ALSNLGSISAES. Positions 1364–1512 constitute a GAIN-B domain; sequence RFTGLSENSQ…SVLRRKLNAT (149 aa). Residue Asn-1458 is glycosylated (N-linked (GlcNAc...) asparagine). The cysteines at positions 1468 and 1494 are disulfide-linked. Positions 1468-1512 are GPS; it reads CVFWDKTEWRSEGPYPQPGSSPEKVNCSYHHLAPVSVLRRKLNAT. Asn-1510 carries an N-linked (GlcNAc...) asparagine glycan. The chain crosses the membrane as a helical span at residues 1525–1545; the sequence is PHNLLPGIFSAFLLVLYGILV. The Cytoplasmic segment spans residues 1546-1732; sequence SKSRYVDCHE…PPSRSYLHTQ (187 aa). The PLAT domain maps to 1573–1690; sequence QLYAVVIDTG…LGGHVLREFF (118 aa). Residues 1733-1753 traverse the membrane as a helical segment; it reads RLAVSFCLLCVYSCLTALVTV. At 1754–1772 the chain is on the extracellular side; it reads RDHQQRPLDVGPTAITLEP. A helical transmembrane segment spans residues 1773-1793; that stretch reads FCMALLCTLLACPVAQLLSLL. The Cytoplasmic segment spans residues 1794-1905; sequence FRCSKEARGD…ELGSQKSRVC (112 aa). Residues 1807 to 1840 form a disordered region; sequence STQWPLRGVKTETPQGHDSSGRPDSRQPSPHPTS. Residues 1906–1926 form a helical membrane-spanning segment; sequence LLWSSSVAWAISGSASLACGL. Residues 1927 to 1950 lie on the Extracellular side of the membrane; it reads GTGFLGYWFVPAQCMWWLYLLLLS. The helical transmembrane segment at 1951–1971 threads the bilayer; sequence LVCCAFITQPLMICLAALVFA. At 1972–2057 the chain is on the cytoplasmic side; the sequence is WKRKHDSKFF…ERLRRESIMQ (86 aa). The chain crosses the membrane as a helical span at residues 2058 to 2078; that stretch reads AALRDMTTHSIMLLLLLFIAY. Over 2079 to 2288 the chain is Extracellular; that stretch reads GRFCPGEISL…IFYSDSALKY (210 aa). Residues 2289 to 2309 form a helical membrane-spanning segment; sequence LLMLSELLFLVLNVIHLCFQL. At 2310 to 2332 the chain is on the cytoplasmic side; it reads WGMTTKGILSYWRKPRHWLELSM. The helical transmembrane segment at 2333 to 2353 threads the bilayer; the sequence is VGVAIAYYAASGHLTTLAVNI. The Extracellular segment spans residues 2354–2379; the sequence is TDQFHKGLYQRLVDIGLMVSWHQRAR. Residues 2380–2400 traverse the membrane as a helical segment; sequence CLQGILLFLWMLKYVHLLSSL. The Cytoplasmic portion of the chain corresponds to 2401–2405; sequence STMTP. A helical transmembrane segment spans residues 2406 to 2426; that stretch reads FSAVTCFPLFRVLLVGALLLA. The Extracellular segment spans residues 2427-2483; sequence AHYHSRWFLLFTGTLSHGTSAEAFPGLLLQFPGRSKKDSWHNCLKSDHGVMRCYYGT. A helical transmembrane segment spans residues 2484-2504; it reads LFLLLATLGFRMLRATFLTVF. Topologically, residues 2505–2615 are cytoplasmic; that stretch reads QNRKSSHRKP…VSGPLAAESE (111 aa). Residues 2589-2615 are disordered; that stretch reads RAGDSPPVGSSEYQATGVSGPLAAESE.

It belongs to the polycystin family. As to quaternary structure, heterodimer. Interacts with PKD2 to form a calcium channel. Interacts with PKD2L1; to form ciliary calcium channel. May interact with GNA12, GNAS, GNAI1 and GNAI2. As to expression, in testis, strong expression in Leydig cells, low level in seminal ducts, myoid cells and tunica vaginalis. Other tissues, including adrenal gland and heart myocardium, also show low expression. In embryo, highly expressed in the node.

It localises to the cell projection. Its subcellular location is the cilium membrane. Its function is as follows. Component of a calcium-permeant ion channel formed by PKD1L2 and PKD1L1 in primary cilia, where it controls cilium calcium concentration, without affecting cytoplasmic calcium concentration, and regulates sonic hedgehog/SHH signaling and GLI2 transcription. The PKD1L1:PKD2L1 channel complex is mechanosensitive only at high pressures and is highly temperature sensitive. Also involved in left/right axis specification downstream of nodal flow by forming a complex with PKD2 in cilia to facilitate flow detection in left/right patterning. May function as a G-protein-coupled receptor. This chain is Polycystin-1-like protein 1, found in Mus musculus (Mouse).